A 95-amino-acid polypeptide reads, in one-letter code: Co-chaperonin GroES (95 aa).

This sequence belongs to the GroES chaperonin family. Heptamer of 7 subunits arranged in a ring. Interacts with the chaperonin GroEL.

It localises to the cytoplasm. Functionally, together with the chaperonin GroEL, plays an essential role in assisting protein folding. The GroEL-GroES system forms a nano-cage that allows encapsulation of the non-native substrate proteins and provides a physical environment optimized to promote and accelerate protein folding. GroES binds to the apical surface of the GroEL ring, thereby capping the opening of the GroEL channel. This is Co-chaperonin GroES from Jannaschia sp. (strain CCS1).